The primary structure comprises 100 residues: Small ribosomal subunit protein uS14c (100 aa).

The protein belongs to the universal ribosomal protein uS14 family. As to quaternary structure, part of the 30S ribosomal subunit.

Its subcellular location is the plastid. It localises to the chloroplast. In terms of biological role, binds 16S rRNA, required for the assembly of 30S particles. This is Small ribosomal subunit protein uS14c from Oedogonium cardiacum (Filamentous green alga).